The chain runs to 135 residues: UPF0299 membrane protein YPK_2559 (135 aa).

3 helical membrane passes run 30–50 (LLLP…FVLL), 66–86 (LLIR…MQYY), and 93–113 (FGPI…VVAY).

It belongs to the UPF0299 family.

The protein resides in the cell inner membrane. This Yersinia pseudotuberculosis serotype O:3 (strain YPIII) protein is UPF0299 membrane protein YPK_2559.